Here is a 279-residue protein sequence, read N- to C-terminus: Reaction center protein L chain (279 aa).

The next 3 helical transmembrane spans lie at 33–56, 85–113, and 116–141; these read GFFG…GASQ, GLWQ…RKLG, and YHVP…ILMG. The (7R,8Z)-bacteriochlorophyll b site is built by H154 and H174. A helical membrane pass occupies residues 171–200; that stretch reads NPAHMLAITFFFTTTLAMSMHGGLILSAAN. Position 191 (H191) interacts with Fe cation. An a ubiquinone-binding site is contributed by F217. The helical transmembrane segment at 226-252 threads the bilayer; sequence GSLGIHRLGLFLALSAAFWSAVCIVIS. H231 lines the Fe cation pocket.

The protein belongs to the reaction center PufL/M/PsbA/D family. Reaction center is composed of four bacteriochlorophylls, two bacteriopheophytins, two ubiquinones, one iron, and three highly hydrophobic polypeptide chains (designated L, M, and H).

The protein resides in the cell inner membrane. The reaction center is a membrane-bound complex that mediates the initial photochemical event in the electron transfer process of photosynthesis. In Rubrivivax gelatinosus (Rhodocyclus gelatinosus), this protein is Reaction center protein L chain (pufL).